Reading from the N-terminus, the 351-residue chain is Columbamine O-methyltransferase (351 aa).

5 residues coordinate S-adenosyl-L-methionine: Gly-198, Asp-221, Asp-241, Met-242, and Lys-255. Catalysis depends on His-259, which acts as the Proton acceptor.

Belongs to the class I-like SAM-binding methyltransferase superfamily. Cation-independent O-methyltransferase family. COMT subfamily. In terms of assembly, homodimer.

The catalysed reaction is columbamine + S-adenosyl-L-methionine = palmatine + S-adenosyl-L-homocysteine + H(+). The enzyme catalyses (S)-tetrahydrocolumbamine + S-adenosyl-L-methionine = (S)-tetrahydropalmatine + S-adenosyl-L-homocysteine + H(+). It functions in the pathway alkaloid biosynthesis; palmatine biosynthesis; palmatine from columbamine: step 1/1. Its function is as follows. Catalyzes the conversion of tetrahydrocolumbamine to (S)-tetrahydropalmatine and of columbamine to palmatine, an isoquinoline alkaloid. This Coptis japonica (Japanese goldthread) protein is Columbamine O-methyltransferase.